Consider the following 235-residue polypeptide: Phosphoribosylaminoimidazole-succinocarboxamide synthase (235 aa).

Belongs to the SAICAR synthetase family.

It carries out the reaction 5-amino-1-(5-phospho-D-ribosyl)imidazole-4-carboxylate + L-aspartate + ATP = (2S)-2-[5-amino-1-(5-phospho-beta-D-ribosyl)imidazole-4-carboxamido]succinate + ADP + phosphate + 2 H(+). Its pathway is purine metabolism; IMP biosynthesis via de novo pathway; 5-amino-1-(5-phospho-D-ribosyl)imidazole-4-carboxamide from 5-amino-1-(5-phospho-D-ribosyl)imidazole-4-carboxylate: step 1/2. In Chloroherpeton thalassium (strain ATCC 35110 / GB-78), this protein is Phosphoribosylaminoimidazole-succinocarboxamide synthase.